Consider the following 571-residue polypeptide: Isocitrate dehydrogenase kinase/phosphatase (571 aa).

ATP contacts are provided by residues 318–324 (APGVRGM) and Lys-339. Residue Asp-374 is part of the active site.

Belongs to the AceK family.

It localises to the cytoplasm. The enzyme catalyses L-seryl-[isocitrate dehydrogenase] + ATP = O-phospho-L-seryl-[isocitrate dehydrogenase] + ADP + H(+). Its function is as follows. Bifunctional enzyme which can phosphorylate or dephosphorylate isocitrate dehydrogenase (IDH) on a specific serine residue. This is a regulatory mechanism which enables bacteria to bypass the Krebs cycle via the glyoxylate shunt in response to the source of carbon. When bacteria are grown on glucose, IDH is fully active and unphosphorylated, but when grown on acetate or ethanol, the activity of IDH declines drastically concomitant with its phosphorylation. This is Isocitrate dehydrogenase kinase/phosphatase from Pseudomonas putida (strain ATCC 700007 / DSM 6899 / JCM 31910 / BCRC 17059 / LMG 24140 / F1).